The primary structure comprises 435 residues: Histidine--tRNA ligase (435 aa).

Belongs to the class-II aminoacyl-tRNA synthetase family. Homodimer.

It localises to the cytoplasm. The enzyme catalyses tRNA(His) + L-histidine + ATP = L-histidyl-tRNA(His) + AMP + diphosphate + H(+). The sequence is that of Histidine--tRNA ligase from Synechococcus sp. (strain ATCC 27144 / PCC 6301 / SAUG 1402/1) (Anacystis nidulans).